The following is a 430-amino-acid chain: Adenylosuccinate synthetase (430 aa).

GTP-binding positions include G12–K18 and G40–T42. The active-site Proton acceptor is D13. Mg(2+)-binding residues include D13 and G40. Residues D13–K16, N38–H41, T128, R142, Q223, T238, and R302 each bind IMP. The Proton donor role is filled by H41. T298–R304 contributes to the substrate binding site. GTP is bound by residues R304, S330–D332, and S412–G414.

It belongs to the adenylosuccinate synthetase family. In terms of assembly, homodimer. Mg(2+) is required as a cofactor.

The protein resides in the cytoplasm. The enzyme catalyses IMP + L-aspartate + GTP = N(6)-(1,2-dicarboxyethyl)-AMP + GDP + phosphate + 2 H(+). It participates in purine metabolism; AMP biosynthesis via de novo pathway; AMP from IMP: step 1/2. Its function is as follows. Plays an important role in the de novo pathway of purine nucleotide biosynthesis. Catalyzes the first committed step in the biosynthesis of AMP from IMP. This Streptococcus pyogenes serotype M49 (strain NZ131) protein is Adenylosuccinate synthetase.